The primary structure comprises 87 residues: Phosphocarrier protein HPr (87 aa).

Positions 2-87 (ASKDFHIVAE…NETMTKEGLA (86 aa)) constitute an HPr domain. H15 functions as the Pros-phosphohistidine intermediate in the catalytic mechanism. A Phosphoserine; by HPrK/P modification is found at S46.

This sequence belongs to the HPr family.

The protein localises to the cytoplasm. Phosphorylation on Ser-46 inhibits the phosphoryl transfer from enzyme I to HPr. In terms of biological role, general (non sugar-specific) component of the phosphoenolpyruvate-dependent sugar phosphotransferase system (sugar PTS). This major carbohydrate active-transport system catalyzes the phosphorylation of incoming sugar substrates concomitantly with their translocation across the cell membrane. The phosphoryl group from phosphoenolpyruvate (PEP) is transferred to the phosphoryl carrier protein HPr by enzyme I. Phospho-HPr then transfers it to the PTS EIIA domain. Its function is as follows. P-Ser-HPr interacts with the catabolite control protein A (CcpA), forming a complex that binds to DNA at the catabolite response elements cre, operator sites preceding a large number of catabolite-regulated genes. Thus, P-Ser-HPr is a corepressor in carbon catabolite repression (CCR), a mechanism that allows bacteria to coordinate and optimize the utilization of available carbon sources. P-Ser-HPr also plays a role in inducer exclusion, in which it probably interacts with several non-PTS permeases and inhibits their transport activity. In Streptococcus mutans serotype c (strain ATCC 700610 / UA159), this protein is Phosphocarrier protein HPr (ptsH).